The primary structure comprises 384 residues: 8-amino-7-oxononanoate synthase (384 aa).

Arginine 21 contributes to the substrate binding site. 108 to 109 (GF) lines the pyridoxal 5'-phosphate pocket. Histidine 133 provides a ligand contact to substrate. Positions 179, 207, and 233 each coordinate pyridoxal 5'-phosphate. An N6-(pyridoxal phosphate)lysine modification is found at lysine 236. Threonine 352 contributes to the substrate binding site.

This sequence belongs to the class-II pyridoxal-phosphate-dependent aminotransferase family. BioF subfamily. In terms of assembly, homodimer. The cofactor is pyridoxal 5'-phosphate.

It carries out the reaction 6-carboxyhexanoyl-[ACP] + L-alanine + H(+) = (8S)-8-amino-7-oxononanoate + holo-[ACP] + CO2. Its pathway is cofactor biosynthesis; biotin biosynthesis. In terms of biological role, catalyzes the decarboxylative condensation of pimeloyl-[acyl-carrier protein] and L-alanine to produce 8-amino-7-oxononanoate (AON), [acyl-carrier protein], and carbon dioxide. This Shigella flexneri serotype 5b (strain 8401) protein is 8-amino-7-oxononanoate synthase.